A 134-amino-acid polypeptide reads, in one-letter code: Protein YhfA (134 aa).

This is Protein YhfA (yhfA) from Escherichia coli O157:H7.